The following is a 146-amino-acid chain: uncharacterized protein (146 aa).

5 helical membrane-spanning segments follow: residues 5-27 (GAMV…YGLA), 32-49 (FVYV…YIIL), 61-80 (LAVM…FFSG), 90-108 (SLGL…ARVF), and 120-142 (FFLK…MLFL).

The protein resides in the cell membrane. This is an uncharacterized protein from Archaeoglobus fulgidus (strain ATCC 49558 / DSM 4304 / JCM 9628 / NBRC 100126 / VC-16).